A 326-amino-acid polypeptide reads, in one-letter code: Transmembrane protein 171 (326 aa).

Transmembrane regions (helical) follow at residues 22–42, 57–77, 114–134, and 161–181; these read IFFL…LSIF, MMLK…VILA, LIFG…GIWV, and FLSL…FFVV. Residues 229–326 form a disordered region; sequence FPESSASAAA…LSPSSEPSPP (98 aa). The span at 230 to 240 shows a compositional bias: low complexity; sequence PESSASAAARS. Positions 257–266 are enriched in polar residues; that stretch reads SIFQSGSPTP. 2 stretches are compositionally biased toward low complexity: residues 288–302 and 312–326; these read SSSE…LSEL and ATTT…PSPP.

The protein localises to the membrane. This is Transmembrane protein 171 (TMEM171) from Bos taurus (Bovine).